The primary structure comprises 368 residues: MNVLRSGIVTMLLLAAFSVQAACTWPAWEQFKKDYISQEGRVIDPSDARKITTSEGQSYGMFSALAANDRAAFDNILDWTQNNLAQGSLKERLPAWLWGKKENSKWEVLDSNSASDGDVWMAWSLLEAGRLWKEQRYTDIGSALLKRIAREEVVTVPGLGSMLLPGKVGFAEDNSWRFNPSYLPPTLAQYFTRFGAPWTTLRETNQRLLLETAPKGFSPDWVRYEKDKGWQLKAEKTLISSYDAIRVYMWVGMMPDSDPQKARMLNRFKPMATFTEKNGYPPEKVDVATGKAQGKGPVGFSAAMLPFLQNRDAQAVQRQRVADNFPGSDAYYNYVLTLFGQGWDQHRFRFSTKGELLPDWGQECANSH.

Positions M1–A21 are cleaved as a signal peptide. E55 functions as the Proton donor in the catalytic mechanism. D116 (nucleophile) is an active-site residue.

It belongs to the glycosyl hydrolase 8 (cellulase D) family.

The protein localises to the secreted. The enzyme catalyses Endohydrolysis of (1-&gt;4)-beta-D-glucosidic linkages in cellulose, lichenin and cereal beta-D-glucans.. Its pathway is glycan metabolism; bacterial cellulose biosynthesis. Its function is as follows. Hydrolyzes carboxymethylcellulose. In Escherichia coli (strain K12), this protein is Endoglucanase (bcsZ).